Reading from the N-terminus, the 122-residue chain is uncharacterized protein (122 aa).

This is an uncharacterized protein from Escherichia coli O157:H7.